Here is a 678-residue protein sequence, read N- to C-terminus: Vitrin (678 aa).

An N-terminal signal peptide occupies residues 1 to 26 (MRTVVLTMKASVIEMFLVLLVTGVHS). The LCCL domain maps to 40-133 (TVPQINCDVK…LSLPRWRESF (94 aa)). 2 cysteine pairs are disulfide-bonded: cysteine 46/cysteine 62 and cysteine 66/cysteine 86. Residues 154–168 (SSKSPAAQAGETTKA) are compositionally biased toward polar residues. 2 disordered regions span residues 154 to 177 (SSKS…IPGT) and 199 to 257 (TLPR…GAAF). The span at 199-216 (TLPRPSPSAASTTSIPRP) shows a compositional bias: low complexity. Positions 230–240 (STATYTSSQNR) are enriched in polar residues. VWFA domains are found at residues 293–478 (DLSF…VKRV) and 495–668 (DIGF…IQNI). N-linked (GlcNAc...) asparagine glycans are attached at residues asparagine 390 and asparagine 520.

Binds dermatan sulfate and chondroitin sulfate.

It is found in the secreted. Its subcellular location is the extracellular space. The protein localises to the extracellular matrix. Functionally, promotes matrix assembly and cell adhesiveness. Plays a role in spinal cord formation by regulating the proliferation and differentiation of neural stem cells. This chain is Vitrin (VIT), found in Homo sapiens (Human).